A 293-amino-acid chain; its full sequence is Glycine--tRNA ligase alpha subunit (293 aa).

This sequence belongs to the class-II aminoacyl-tRNA synthetase family. Tetramer of two alpha and two beta subunits.

Its subcellular location is the cytoplasm. It carries out the reaction tRNA(Gly) + glycine + ATP = glycyl-tRNA(Gly) + AMP + diphosphate. The chain is Glycine--tRNA ligase alpha subunit from Oceanobacillus iheyensis (strain DSM 14371 / CIP 107618 / JCM 11309 / KCTC 3954 / HTE831).